Consider the following 266-residue polypeptide: Eukaryotic translation initiation factor 3 subunit J (266 aa).

Disordered stretches follow at residues Met1–Ala111 and Asn217–Met266. The span at Asp26 to Val44 shows a compositional bias: acidic residues. The stretch at Glu40–Lys82 forms a coiled coil. 2 stretches are compositionally biased toward basic and acidic residues: residues Glu45–Ala61 and Arg73–Ala85. Residues Asp86–Glu97 are compositionally biased toward acidic residues. 2 stretches are compositionally biased toward basic and acidic residues: residues Ala98–Ala111 and Glu218–Asn230. The span at Ser254–Met266 shows a compositional bias: acidic residues.

This sequence belongs to the eIF-3 subunit J family. As to quaternary structure, component of the eukaryotic translation initiation factor 3 (eIF-3) complex.

It localises to the cytoplasm. Its function is as follows. Component of the eukaryotic translation initiation factor 3 (eIF-3) complex, which is involved in protein synthesis of a specialized repertoire of mRNAs and, together with other initiation factors, stimulates binding of mRNA and methionyl-tRNAi to the 40S ribosome. The eIF-3 complex specifically targets and initiates translation of a subset of mRNAs involved in cell proliferation. The chain is Eukaryotic translation initiation factor 3 subunit J (hcr1) from Aspergillus niger (strain ATCC MYA-4892 / CBS 513.88 / FGSC A1513).